Consider the following 394-residue polypeptide: NAD(P)H-quinone oxidoreductase subunit H (394 aa).

The protein belongs to the complex I 49 kDa subunit family. In terms of assembly, NDH-1 can be composed of about 15 different subunits; different subcomplexes with different compositions have been identified which probably have different functions.

The protein localises to the cellular thylakoid membrane. It catalyses the reaction a plastoquinone + NADH + (n+1) H(+)(in) = a plastoquinol + NAD(+) + n H(+)(out). The catalysed reaction is a plastoquinone + NADPH + (n+1) H(+)(in) = a plastoquinol + NADP(+) + n H(+)(out). Its function is as follows. NDH-1 shuttles electrons from an unknown electron donor, via FMN and iron-sulfur (Fe-S) centers, to quinones in the respiratory and/or the photosynthetic chain. The immediate electron acceptor for the enzyme in this species is believed to be plastoquinone. Couples the redox reaction to proton translocation, and thus conserves the redox energy in a proton gradient. Cyanobacterial NDH-1 also plays a role in inorganic carbon-concentration. In Thermosynechococcus vestitus (strain NIES-2133 / IAM M-273 / BP-1), this protein is NAD(P)H-quinone oxidoreductase subunit H.